The following is a 481-amino-acid chain: 2-succinylbenzoate--CoA ligase (481 aa).

Belongs to the ATP-dependent AMP-binding enzyme family. MenE subfamily.

The enzyme catalyses 2-succinylbenzoate + ATP + CoA = 2-succinylbenzoyl-CoA + AMP + diphosphate. It participates in quinol/quinone metabolism; 1,4-dihydroxy-2-naphthoate biosynthesis; 1,4-dihydroxy-2-naphthoate from chorismate: step 5/7. Its pathway is quinol/quinone metabolism; menaquinone biosynthesis. Functionally, converts 2-succinylbenzoate (OSB) to 2-succinylbenzoyl-CoA (OSB-CoA). This Bacillus cereus (strain Q1) protein is 2-succinylbenzoate--CoA ligase.